The chain runs to 471 residues: Alpha-galactosidase 5 (471 aa).

Residues 1 to 18 (MFAFYFLTACTTLKGVFG) form the signal peptide. Cysteine 42 and cysteine 74 form a disulfide bridge. Positions 72 and 73 each coordinate substrate. N-linked (GlcNAc...) asparagine glycosylation is present at asparagine 105. A disulfide bond links cysteine 121 and cysteine 151. Residue lysine 147 participates in substrate binding. Catalysis depends on aspartate 149, which acts as the Nucleophile. Asparagine 175 carries N-linked (GlcNAc...) asparagine glycosylation. Arginine 205 contributes to the substrate binding site. The active-site Proton donor is aspartate 209. 2 cysteine pairs are disulfide-bonded: cysteine 221–cysteine 237 and cysteine 223–cysteine 230. Position 251 (glutamine 251) interacts with substrate. 6 N-linked (GlcNAc...) asparagine glycosylation sites follow: asparagine 270, asparagine 370, asparagine 403, asparagine 422, asparagine 435, and asparagine 454.

The protein belongs to the glycosyl hydrolase 27 family. Homotetramer.

The protein resides in the secreted. It carries out the reaction Hydrolysis of terminal, non-reducing alpha-D-galactose residues in alpha-D-galactosides, including galactose oligosaccharides, galactomannans and galactolipids.. In Saccharomyces cerevisiae (Baker's yeast), this protein is Alpha-galactosidase 5 (MEL5).